Reading from the N-terminus, the 397-residue chain is MTATDPVANLQTLIRCPSVTPAEGGALSALEAMLAPLGFTVDRVKASEEGTPDIENLYARLGTDGPHLMFAGHTDVVPVGDEAAWTHPPFAAEISKGELFGRGAVDMKGGIACFVAAVARHIEKSGQPKGSISFLITGDEEGPAINGTIKLLQWAAERGERWDACLVGEPTNPDRLGDMIKIGRRGSLSGKITVHGVQGHAAYPHLADNPVRGMLQMTHALMDPPFDGGTDDFQPSNLEVTTVDVGNPATNVIPAKASASFNIRFNDSWTVETLRAEILRRLDAAAGNGELRPGRDPVKYDIVWADRPSHVFLTRNNALIASLSSAVESVSGQSPKLSTTGGTSDARFIKDYCPVVEFGLVGQTMHMVDERVAVADLETLTAIYETFIARWFANAGL.

Zn(2+) is bound at residue H73. D75 is a catalytic residue. A Zn(2+)-binding site is contributed by D106. E140 (proton acceptor) is an active-site residue. Residues E141, E169, and H366 each coordinate Zn(2+).

Belongs to the peptidase M20A family. DapE subfamily. As to quaternary structure, homodimer. Zn(2+) serves as cofactor. Co(2+) is required as a cofactor.

It catalyses the reaction N-succinyl-(2S,6S)-2,6-diaminopimelate + H2O = (2S,6S)-2,6-diaminopimelate + succinate. It participates in amino-acid biosynthesis; L-lysine biosynthesis via DAP pathway; LL-2,6-diaminopimelate from (S)-tetrahydrodipicolinate (succinylase route): step 3/3. In terms of biological role, catalyzes the hydrolysis of N-succinyl-L,L-diaminopimelic acid (SDAP), forming succinate and LL-2,6-diaminopimelate (DAP), an intermediate involved in the bacterial biosynthesis of lysine and meso-diaminopimelic acid, an essential component of bacterial cell walls. The protein is Succinyl-diaminopimelate desuccinylase of Rhizobium johnstonii (strain DSM 114642 / LMG 32736 / 3841) (Rhizobium leguminosarum bv. viciae).